The chain runs to 544 residues: Protein adenylyltransferase (544 aa).

In terms of domain architecture, Fido spans 63–216; that stretch reads FDTAYLCHIH…LEPMQHLFED (154 aa). ATP is bound by residues 93 to 94, 106 to 107, 163 to 167, and arginine 170; these read FA, RT, and EGNGR.

Its subcellular location is the secreted. The enzyme catalyses L-tyrosyl-[protein] + ATP = O-(5'-adenylyl)-L-tyrosyl-[protein] + diphosphate. It carries out the reaction L-threonyl-[protein] + ATP = 3-O-(5'-adenylyl)-L-threonyl-[protein] + diphosphate. Its function is as follows. Adenylyltransferase involved in virulence by mediating the addition of adenosine 5'-monophosphate (AMP) to specific residue of host target proteins. This chain is Protein adenylyltransferase (bepA), found in Bartonella henselae (strain ATCC 49882 / DSM 28221 / CCUG 30454 / Houston 1) (Rochalimaea henselae).